The chain runs to 106 residues: Urease subunit beta (106 aa).

This sequence belongs to the urease beta subunit family. As to quaternary structure, heterotrimer of UreA (gamma), UreB (beta) and UreC (alpha) subunits. Three heterotrimers associate to form the active enzyme.

It is found in the cytoplasm. It catalyses the reaction urea + 2 H2O + H(+) = hydrogencarbonate + 2 NH4(+). Its pathway is nitrogen metabolism; urea degradation; CO(2) and NH(3) from urea (urease route): step 1/1. The protein is Urease subunit beta of Prochlorococcus marinus (strain NATL1A).